Here is a 100-residue protein sequence, read N- to C-terminus: Large ribosomal subunit protein uL23 (100 aa).

This sequence belongs to the universal ribosomal protein uL23 family. Part of the 50S ribosomal subunit. Contacts protein L29, and trigger factor when it is bound to the ribosome.

Functionally, one of the early assembly proteins it binds 23S rRNA. One of the proteins that surrounds the polypeptide exit tunnel on the outside of the ribosome. Forms the main docking site for trigger factor binding to the ribosome. This Parasynechococcus marenigrum (strain WH8102) protein is Large ribosomal subunit protein uL23.